A 359-amino-acid polypeptide reads, in one-letter code: Phospho-N-acetylmuramoyl-pentapeptide-transferase (359 aa).

10 helical membrane-spanning segments follow: residues 3 to 23, 55 to 75, 84 to 104, 117 to 137, 156 to 176, 187 to 207, 231 to 251, 255 to 275, 280 to 300, and 334 to 354; these read QIII…PVLI, VAIL…GIAF, GLLV…DDFI, TSKT…VLQF, IATV…LVMS, LDGL…IVTF, LAVI…WNAA, IFMG…LSVT, LLAV…VLQI, and FWLL…GEWL.

It belongs to the glycosyltransferase 4 family. MraY subfamily. The cofactor is Mg(2+).

The protein resides in the cell membrane. The catalysed reaction is UDP-N-acetyl-alpha-D-muramoyl-L-alanyl-gamma-D-glutamyl-meso-2,6-diaminopimeloyl-D-alanyl-D-alanine + di-trans,octa-cis-undecaprenyl phosphate = di-trans,octa-cis-undecaprenyl diphospho-N-acetyl-alpha-D-muramoyl-L-alanyl-D-glutamyl-meso-2,6-diaminopimeloyl-D-alanyl-D-alanine + UMP. The protein operates within cell wall biogenesis; peptidoglycan biosynthesis. Functionally, catalyzes the initial step of the lipid cycle reactions in the biosynthesis of the cell wall peptidoglycan: transfers peptidoglycan precursor phospho-MurNAc-pentapeptide from UDP-MurNAc-pentapeptide onto the lipid carrier undecaprenyl phosphate, yielding undecaprenyl-pyrophosphoryl-MurNAc-pentapeptide, known as lipid I. The sequence is that of Phospho-N-acetylmuramoyl-pentapeptide-transferase from Mycobacteroides abscessus (strain ATCC 19977 / DSM 44196 / CCUG 20993 / CIP 104536 / JCM 13569 / NCTC 13031 / TMC 1543 / L948) (Mycobacterium abscessus).